A 393-amino-acid chain; its full sequence is Interleukin-1 receptor type 2 (393 aa).

The signal sequence occupies residues Met-1–Ala-13. Topologically, residues Phe-14–Thr-347 are extracellular. 3 disulfides stabilise this stretch: Cys-28–Cys-116, Cys-50–Cys-108, and Cys-152–Cys-207. Ig-like C2-type domains follow at residues Pro-29–Ser-120, Pro-134–Thr-221, and Pro-237–Lys-342. Asn-66, Asn-72, and Asn-112 each carry an N-linked (GlcNAc...) asparagine glycan. N-linked (GlcNAc...) asparagine glycosylation is found at Asn-219 and Asn-277. The cysteines at positions 258 and 326 are disulfide-linked. Residues Phe-348–Trp-368 traverse the membrane as a helical segment. Topologically, residues Met-369–Phe-393 are cytoplasmic.

The protein belongs to the interleukin-1 receptor family. In terms of assembly, forms a non-signaling receptor complex consisting of IL1R2 and IL1RAP. Post-translationally, a soluble form (sIL1R2) can also be produced by proteolytic cleavage at the cell surface (shedding) involving a metalloproteinase.

It is found in the secreted. The protein resides in the cell membrane. Non-signaling receptor for IL1A, IL1B and IL1RN. Reduces IL1B activities. Serves as a decoy receptor by competitive binding to IL1B and preventing its binding to IL1R1. Also modulates cellular response through non-signaling association with IL1RAP after binding to IL1B. IL1R2 (membrane and secreted forms) preferentially binds IL1B and poorly IL1A and IL1RN. The secreted IL1R2 recruits secreted IL1RAP with high affinity; this complex formation may be the dominant mechanism for neutralization of IL1B by secreted/soluble receptors. This chain is Interleukin-1 receptor type 2 (IL1R2), found in Chlorocebus aethiops (Green monkey).